The following is a 234-amino-acid chain: Acetylxylan esterase 2 (234 aa).

The N-terminal stretch at 1–17 (MHSKFFAASLLGLGAAA) is a signal peptide. A propeptide spanning residues 18-27 (IPLEGVMEKR) is cleaved from the precursor. Intrachain disulfides connect cysteine 29/cysteine 106 and cysteine 73/cysteine 79. The active site involves serine 117. 3 cysteine pairs are disulfide-bonded: cysteine 128-cysteine 188, cysteine 174-cysteine 206, and cysteine 198-cysteine 205. Aspartate 202 is a catalytic residue. Asparagine 207 carries N-linked (GlcNAc...) asparagine glycosylation. The active site involves histidine 214.

Belongs to the cutinase family. Acetylxylan esterase subfamily. In terms of assembly, monomer.

It is found in the secreted. The enzyme catalyses Deacetylation of xylans and xylo-oligosaccharides.. It participates in glycan degradation; xylan degradation. Functionally, degrades acetylated xylans by cleaving acetyl side groups from the hetero-xylan backbone. The polypeptide is Acetylxylan esterase 2 (axe-2) (Talaromyces purpureogenus (Soft rot fungus)).